A 473-amino-acid chain; its full sequence is Heavy metal-associated isoprenylated plant protein 32 (473 aa).

In terms of domain architecture, HMA spans 9 to 72; sequence IQTCVLKVNI…KLAKSGKHAE (64 aa). Residues Cys-20 and Cys-23 each coordinate a metal cation. Disordered regions lie at residues 96–139, 162–230, and 246–343; these read QIDH…KMGQ, KLPP…PNMT, and ANLA…QNMS. The segment covering 118 to 131 has biased composition (gly residues); that stretch reads KNGGGGGGGGGGGN. The span at 187-217 shows a compositional bias: acidic residues; sequence PEDDDDDDFSDEFDDEFTDDDDDEFDDEFDD. Gly residues predominate over residues 253–339; sequence AKNGGKGAPA…GFRPMGGGGP (87 aa). Cysteine methyl ester is present on Cys-470. Cys-470 carries S-farnesyl cysteine lipidation. A propeptide spans 471 to 473 (removed in mature form); that stretch reads DIM.

The protein belongs to the HIPP family.

Heavy-metal-binding protein. The protein is Heavy metal-associated isoprenylated plant protein 32 of Arabidopsis thaliana (Mouse-ear cress).